The primary structure comprises 153 residues: Protein-export protein SecB (153 aa).

This sequence belongs to the SecB family. Homotetramer, a dimer of dimers. One homotetramer interacts with 1 SecA dimer.

The protein localises to the cytoplasm. One of the proteins required for the normal export of preproteins out of the cell cytoplasm. It is a molecular chaperone that binds to a subset of precursor proteins, maintaining them in a translocation-competent state. It also specifically binds to its receptor SecA. This chain is Protein-export protein SecB, found in Edwardsiella ictaluri (strain 93-146).